The following is a 169-amino-acid chain: ATP synthase subunit b (169 aa).

A helical membrane pass occupies residues 12 to 32 (HIYLGNAIWYLLCFAILMLLI).

The protein belongs to the ATPase B chain family. As to quaternary structure, F-type ATPases have 2 components, F(1) - the catalytic core - and F(0) - the membrane proton channel. F(1) has five subunits: alpha(3), beta(3), gamma(1), delta(1), epsilon(1). F(0) has three main subunits: a(1), b(2) and c(10-14). The alpha and beta chains form an alternating ring which encloses part of the gamma chain. F(1) is attached to F(0) by a central stalk formed by the gamma and epsilon chains, while a peripheral stalk is formed by the delta and b chains.

The protein localises to the cell membrane. Increases 2-fold following exposure to low pH. Functionally, f(1)F(0) ATP synthase produces ATP from ADP in the presence of a proton or sodium gradient. F-type ATPases consist of two structural domains, F(1) containing the extramembraneous catalytic core and F(0) containing the membrane proton channel, linked together by a central stalk and a peripheral stalk. During catalysis, ATP synthesis in the catalytic domain of F(1) is coupled via a rotary mechanism of the central stalk subunits to proton translocation. Component of the F(0) channel, it forms part of the peripheral stalk, linking F(1) to F(0). The protein is ATP synthase subunit b of Lactobacillus acidophilus (strain ATCC 700396 / NCK56 / N2 / NCFM).